A 1242-amino-acid polypeptide reads, in one-letter code: Protein STU1 (1242 aa).

2 stretches are compositionally biased toward low complexity: residues 138-156 and 548-567; these read LNSS…TATK and AASP…PSSA. 6 disordered regions span residues 138–161, 538–612, 637–711, 748–839, 853–884, and 1077–1111; these read LNSS…KPHE, KQLE…NPVF, HVET…LGLG, AEHE…NGNI, AFQT…RPEA, and HPAP…EKRT. Positions 574 to 593 are enriched in basic and acidic residues; it reads KKMDLKAMLAERRRAVKEAG. Low complexity-rich tracts occupy residues 640 to 660 and 701 to 711; these read TSSP…RIRP and SPSLSPSLGLG. Basic and acidic residues predominate over residues 748–767; sequence AEHEVDELTLKEGQKTRDDG. Composition is skewed to polar residues over residues 802 to 815, 824 to 837, and 856 to 871; these read QQGN…SGRV, ATGT…SRNG, and TPLN…SSAI. Residues 1082 to 1104 are compositionally biased toward low complexity; the sequence is SSSADNSDPMTSALSQLSLSSSK.

It belongs to the CLASP family. Interacts with microtubules.

It localises to the cytoplasm. The protein localises to the cytoskeleton. Its subcellular location is the nucleus. It is found in the spindle. In terms of biological role, microtubule binding protein that promotes the stabilization of dynamic microtubules. Required for mitotic spindle formation. This Cryptococcus neoformans var. neoformans serotype D (strain B-3501A) (Filobasidiella neoformans) protein is Protein STU1 (STU1).